A 659-amino-acid polypeptide reads, in one-letter code: 4-alpha-glucanotransferase (659 aa).

E123 acts as the Nucleophile in catalysis. The active-site Proton donor is the D214.

Belongs to the glycosyl hydrolase 57 family. As to quaternary structure, homodimer.

It catalyses the reaction Transfers a segment of a (1-&gt;4)-alpha-D-glucan to a new position in an acceptor, which may be glucose or a (1-&gt;4)-alpha-D-glucan.. Its activity is regulated as follows. Inhibited by p-chloromercuribenzoic acid, monoiodoacetic acid, mercury and nickel ions. Its function is as follows. Catalyzes the transglycosylation of maltooligosaccharides, yielding maltooligosaccharides of various lengths and glucose. Maltose and glucose can be used as acceptors in the transfer reaction. The sequence is that of 4-alpha-glucanotransferase (jgt) from Thermococcus litoralis (strain ATCC 51850 / DSM 5473 / JCM 8560 / NS-C).